The chain runs to 142 residues: Small heat shock protein IbpB (142 aa).

Positions 26–137 constitute a sHSP domain; it reads TGESQSFPPY…APQRIAISER (112 aa).

It belongs to the small heat shock protein (HSP20) family. As to quaternary structure, homodimer. Forms homomultimers of about 100-150 subunits at optimal growth temperatures. Conformation changes to oligomers at high temperatures or high ionic concentrations. The decrease in size of the multimers is accompanied by an increase in chaperone activity.

The protein localises to the cytoplasm. Functionally, associates with aggregated proteins, together with IbpA, to stabilize and protect them from irreversible denaturation and extensive proteolysis during heat shock and oxidative stress. Aggregated proteins bound to the IbpAB complex are more efficiently refolded and reactivated by the ATP-dependent chaperone systems ClpB and DnaK/DnaJ/GrpE. Its activity is ATP-independent. This is Small heat shock protein IbpB from Citrobacter koseri (strain ATCC BAA-895 / CDC 4225-83 / SGSC4696).